The following is a 226-amino-acid chain: 2-C-methyl-D-erythritol 4-phosphate cytidylyltransferase (226 aa).

Belongs to the IspD/TarI cytidylyltransferase family. IspD subfamily.

It catalyses the reaction 2-C-methyl-D-erythritol 4-phosphate + CTP + H(+) = 4-CDP-2-C-methyl-D-erythritol + diphosphate. It functions in the pathway isoprenoid biosynthesis; isopentenyl diphosphate biosynthesis via DXP pathway; isopentenyl diphosphate from 1-deoxy-D-xylulose 5-phosphate: step 2/6. Its function is as follows. Catalyzes the formation of 4-diphosphocytidyl-2-C-methyl-D-erythritol from CTP and 2-C-methyl-D-erythritol 4-phosphate (MEP). This chain is 2-C-methyl-D-erythritol 4-phosphate cytidylyltransferase, found in Synechococcus sp. (strain CC9902).